The chain runs to 623 residues: Set1/Ash2 histone methyltransferase complex subunit ASH2 (623 aa).

Over residues 1 to 18 (MAAAGAGPGPGVSAGPGP) the composition is skewed to gly residues. A PHD-type; atypical zinc finger spans residues 1-62 (MAAAGAGPGP…SGEAESGDAN (62 aa)). The tract at residues 1 to 99 (MAAAGAGPGP…MDTQAGSVDE (99 aa)) is disordered. The span at 36 to 56 (AAGAGEGPSAAPGAEPSSGEA) shows a compositional bias: low complexity. Residues 63–172 (LVDVSGLETE…MCLSALANLT (110 aa)) form a DNA-binding region. Positions 84-95 (GDTSEVMDTQAG) are enriched in polar residues. At S96 the chain carries Phosphoserine. The C4-type zinc finger occupies 112–145 (CGICTKWFTADTFGIDTSSCLPFMTNYSFHCNVC). Residues 230-247 (LVKEHPDPGSKDPEEDYP) are compositionally biased toward basic and acidic residues. The disordered stretch occupies residues 230-326 (LVKEHPDPGS…AQRLPPHGYP (97 aa)). A compositionally biased stretch (polar residues) spans 265–277 (NQKQSSAVSASGN). Gly residues predominate over residues 278 to 290 (LNGGIAAGSSGKG). R291 bears the Asymmetric dimethylarginine; by PRMT1 and PRMT5 mark. Position 311 is a phosphoserine (S311). The segment at 311 to 623 (SDPLFSAQRL…DGRRSPPWEP (313 aa)) is interaction with RBBP5. A B30.2/SPRY domain is found at 355–578 (LDCWAGKPIP…VSINFGPSFK (224 aa)).

Interacts with HCFC1. Core component of several methyltransferase-containing complexes including MLL1/MLL, MLL2/3 (also named ASCOM complex) and MLL4/WBP7. Each complex is at least composed of ASH2L, RBBP5, WDR5, DPY30, one or more specific histone methyltransferases (KMT2A/MLL1, KMT2D/MLL2, KMT2C/MLL3 and KMT2B/MLL4), and the facultative components PAGR1, BACC1, CHD8, E2F6, HCFC1, HCFC2, HSP70, INO80C, KDM6A, KANSL1, LAS1L, MAX, MCRS1, MEN1, MGA, KAT8/MOF, NCOA6, PAXIP1/PTIP, PELP1, PHF20, PRP31, RING2, RUVB1/TIP49A, RUVB2/TIP49B, SENP3, TAF1, TAF4, TAF6, TAF7, TAF9, TEX10 and alpha- and beta-tubulin. Component of the SET1 complex, at least composed of the catalytic subunit (SETD1A or SETD1B), WDR5, WDR82, RBBP5, ASH2L/ASH2, CXXC1/CFP1, HCFC1 and DPY30. Found in a complex with RBBP5, ASH2L, DPY30, KMT2A, KMT2D and WDR5. Component of a histone methylation complex composed of at least ZNF335, RBBP5, ASH2L and WDR5; the complex may have histone H3-specific methyltransferase activity, however does not have specificity for 'Lys-4' of histone H3. Within the complex, interacts with ZNF335. Interacts with RBBP5. Components of this complex may associate with components of a nuclear receptor-mediated transcription complex to form a complex at least composed of ZNF335, HCFC1, CCAR2, EMSY, MKI67, RBBP5, ASH2L and WDR5. Within this complex also interacts with CCAR2 and EMSY. Interacts with DPY30. Interacts with SETD1A and SETD1B. Both monomethylated and dimethylated on arginine residues in the C-terminus. Arg-291 is the major site. Methylation is not required for nuclear localization, nor for MLL complex integrity or maintenance of global histone H3K4me3 levels. In terms of tissue distribution, ubiquitously expressed, with abundant expression in the heart, skeletal muscle and kidney. Low expression is seen in spleen, lung and testis.

The protein localises to the nucleus. Transcriptional regulator. Component or associated component of some histone methyltransferase complexes which regulates transcription through recruitment of those complexes to gene promoters. Component of the Set1/Ash2 histone methyltransferase (HMT) complex, a complex that specifically methylates 'Lys-4' of histone H3, but not if the neighboring 'Lys-9' residue is already methylated. As part of the MLL1/MLL complex it is involved in methylation and dimethylation at 'Lys-4' of histone H3. May play a role in hematopoiesis. In association with RBBP5 and WDR5, stimulates the histone methyltransferase activities of KMT2A, KMT2B, KMT2C, KMT2D, SETD1A and SETD1B. The sequence is that of Set1/Ash2 histone methyltransferase complex subunit ASH2 (Ash2l) from Mus musculus (Mouse).